Here is a 1622-residue protein sequence, read N- to C-terminus: DNA (cytosine-5)-methyltransferase 1 (1622 aa).

The interaction with DNMT3A stretch occupies residues 1–145; that stretch reads MPARTAPARV…RRSKSDSETM (145 aa). 2 interaction with the PRC2/EED-EZH2 complex regions span residues 1–342 and 304–610; these read MPAR…VERK and TPEP…TVIN. Phosphoserine is present on Ser15. Positions 16–109 constitute a DMAP1-binding domain; it reads PAGSLPDHVR…TQKANGCPAN (94 aa). Lys70 bears the N6,N6-dimethyllysine; by EHMT2 mark. The tract at residues 100–360 is disordered; sequence TQKANGCPAN…IPKLNPPQCP (261 aa). The segment covering 126 to 137 has biased composition (basic residues); it reads PRSRPKPRGPRR. Ser138 carries the post-translational modification Phosphoserine. Lys139 bears the N6-methyllysine; by SETD7 mark. The residue at position 140 (Ser140) is a Phosphoserine; by PKB/AKT1. Positions 146–213 are interaction with DNMT3B; sequence IEASSSSVAT…TESRASRAGE (68 aa). Residues Ser149 and Ser151 each carry the phosphoserine modification. The span at 149 to 166 shows a compositional bias: low complexity; sequence SSSSVATRRTTRQTTITS. Thr163 is subject to Phosphothreonine. An N6-acetyllysine modification is found at Lys169. Residues 173 to 200 carry the Nuclear localization signal motif; sequence KRKPKEDSEKGNANESAAEERDQDKKRR. 4 stretches are compositionally biased toward basic and acidic residues: residues 176–197, 207–222, 237–269, and 276–300; these read PKED…DQDK, RASR…ERVR, DDRR…THLD, and KDKR…KEEV. Thr304 carries the post-translational modification Phosphothreonine. A DNA replication foci-targeting sequence region spans residues 327–556; that stretch reads KPEPLSIPVQ…NVNRFTEDSL (230 aa). Zn(2+) contacts are provided by Cys359 and Cys362. The residue at position 372 (Lys372) is an N6-acetyllysine. Position 400 is a phosphoserine (Ser400). Zn(2+)-binding residues include Cys420 and His424. Ser515 and Ser555 each carry phosphoserine. A CXXC-type zinc finger spans residues 650-696; it reads NTMKRRRCGVCEVCQQPECGKCKACKDMVKFGGTGRSKQACLKRRCP. 8 residues coordinate Zn(2+): Cys657, Cys660, Cys663, Cys668, Cys671, Cys674, Cys690, and Cys695. Residues 697 to 758 are autoinhibitory linker; that stretch reads NLAVKEADED…TYYWKVSIDE (62 aa). Residues 702–733 are disordered; that stretch reads EADEDEEADDDIPELPSPKKLHQGKKKKQNKD. The span at 703–714 shows a compositional bias: acidic residues; the sequence is ADEDEEADDDIP. The residue at position 718 (Ser718) is a Phosphoserine. Positions 720 to 731 are enriched in basic residues; it reads KKLHQGKKKKQN. The residue at position 736 (Ser736) is a Phosphoserine. Lys753 is subject to N6-acetyllysine. The region spanning 759–884 is the BAH 1 domain; it reads ETLEVGDCVS…QDYARFESPP (126 aa). A Phosphoserine modification is found at Ser882. N6-acetyllysine occurs at positions 895, 961, and 980. Residues 977–1105 form the BAH 2 domain; sequence TYRKYSDYIK…SKTKSFEDPP (129 aa). Residues 1099 to 1138 form a disordered region; it reads KSFEDPPNHARSPGNKGKGKGKGKGKGKPQVSEPKEPEAA. A run of 6 repeats spans residues 1114–1115, 1116–1117, 1118–1119, 1120–1121, 1122–1123, and 1124–1125. The segment at 1114–1127 is 7 X 2 AA tandem repeats of K-G; it reads KGKGKGKGKGKGKP. The span at 1115–1125 shows a compositional bias: basic residues; the sequence is GKGKGKGKGKG. N6-acetyllysine is present on residues Lys1116, Lys1118, Lys1120, Lys1122, Lys1124, and Lys1126. Residues 1126–1127 form a 7; approximate repeat; sequence KP. The interval 1126-1622 is interaction with the PRC2/EED-EZH2 complex; that stretch reads KPQVSEPKEP…KGKEETTTED (497 aa). The SAM-dependent MTase C5-type domain maps to 1144–1603; that stretch reads LRTLDVFSGC…LEIKLCLLAS (460 aa). The segment at 1144–1622 is catalytic; it reads LRTLDVFSGC…KGKEETTTED (479 aa). S-adenosyl-L-methionine-binding positions include Ser1151, 1155 to 1156, 1173 to 1174, 1195 to 1196, and Cys1196; these read GL, EM, and DC. The active site involves Cys1231. Position 1354 is an N6-acetyllysine (Lys1354). At Ser1436 the chain carries Phosphoserine. Asn1582 and Val1584 together coordinate S-adenosyl-L-methionine. Lys1613 participates in a covalent cross-link: Glycyl lysine isopeptide (Lys-Gly) (interchain with G-Cter in SUMO2).

This sequence belongs to the class I-like SAM-binding methyltransferase superfamily. C5-methyltransferase family. Homodimer. Forms a stable complex with E2F1, BB1 and HDAC1. Forms a complex with DMAP1 and HDAC2, with direct interaction. Interacts with the PRC2/EED-EZH2 complex. Probably part of a corepressor complex containing ZNF304, TRIM28, SETDB1 and DNMT1. Interacts with UHRF1; promoting its recruitment to hemimethylated DNA. Interacts with USP7, promoting its deubiquitination. Interacts with PCNA. Interacts with MBD2 and MBD3. Interacts with DNMT3A and DNMT3B. Interacts with UBC9. Interacts with CSNK1D. Interacts with HDAC1. Interacts with BAZ2A/TIP5. Interacts with SIRT7. Interacts with ZNF263; recruited to the SIX3 promoter along with other proteins involved in chromatin modification and transcriptional corepression where it contributes to transcriptional repression. Interacts with L3MBTL3 and DCAF5; the interaction requires DNMT1 methylation at Lys-139 and is necessary to target DNMT1 for ubiquitination by the CRL4-DCAF5 E3 ubiquitin ligase complex and proteasomal degradation. Interacts with PHF20L1; the interaction requires DNMT1 methylation at Lys-139 and protects DNMT1 from ubiquitination and proteasomal degradation. In terms of processing, sumoylated; sumoylation increases activity. Post-translationally, acetylation on multiple lysines, mainly by KAT2B/PCAF, regulates cell cycle G(2)/M transition. Deacetylation of Lys-1116 and Lys-1354 by SIRT1 increases methyltransferase activity. Phosphorylation of Ser-151 by CDKs is important for enzymatic activity and protein stability. Phosphorylation of Ser-140 by AKT1 prevents methylation by SETD7 thereby increasing DNMT1 stability. In terms of processing, methylation at Lys-139 by SETD7 is necessary for the regulation of DNMT1 proteasomal degradation. Post-translationally, ubiquitinated by UHRF1; interaction with USP7 counteracts ubiquitination by UHRF1 by promoting deubiquitination and preventing degradation by the proteasome. As to expression, isoforms 0 and 8 are highly expressed in placenta, brain, lung, spleen, kidney, heart, and at much lower levels in liver. Isoform 1 is expressed in cerebellum, isoform 2 in muscle and testis, isoform 3 in lung, isoform 4 in spleen and brain, and isoform 5 in brain.

It is found in the nucleus. It carries out the reaction a 2'-deoxycytidine in DNA + S-adenosyl-L-methionine = a 5-methyl-2'-deoxycytidine in DNA + S-adenosyl-L-homocysteine + H(+). Methylates CpG residues. Preferentially methylates hemimethylated DNA. Associates with DNA replication sites in S phase maintaining the methylation pattern in the newly synthesized strand, that is essential for epigenetic inheritance. Associates with chromatin during G2 and M phases to maintain DNA methylation independently of replication. It is responsible for maintaining methylation patterns established in development. DNA methylation is coordinated with methylation of histones. Mediates transcriptional repression by direct binding to HDAC2. In association with DNMT3B and via the recruitment of CTCFL/BORIS, involved in activation of BAG1 gene expression by modulating dimethylation of promoter histone H3 at H3K4 and H3K9. Probably forms a corepressor complex required for activated KRAS-mediated promoter hypermethylation and transcriptional silencing of tumor suppressor genes (TSGs) or other tumor-related genes in colorectal cancer (CRC) cells. Also required to maintain a transcriptionally repressive state of genes in undifferentiated embryonic stem cells (ESCs). Associates at promoter regions of tumor suppressor genes (TSGs) leading to their gene silencing. Promotes tumor growth. The polypeptide is DNA (cytosine-5)-methyltransferase 1 (Dnmt1) (Rattus norvegicus (Rat)).